Reading from the N-terminus, the 407-residue chain is Na(+)-translocating NADH-quinone reductase subunit F (407 aa).

Residues 6–26 (IFLAIGMFTAIVLGLVAIILV) traverse the membrane as a helical segment. Positions 35–127 (GDVTIQINGE…DMQIRVPEEV (93 aa)) constitute a 2Fe-2S ferredoxin-type domain. The [2Fe-2S] cluster site is built by cysteine 70, cysteine 76, cysteine 79, and cysteine 111. Residues 130 to 269 (VKKWECTVES…YGPFGEFFAK (140 aa)) form the FAD-binding FR-type domain. Positions 272-389 (EAEMVFIGGG…PMMNAAVIKM (118 aa)) are catalytic.

This sequence belongs to the NqrF family. In terms of assembly, composed of six subunits; NqrA, NqrB, NqrC, NqrD, NqrE and NqrF. [2Fe-2S] cluster serves as cofactor. The cofactor is FAD.

The protein resides in the cell inner membrane. It catalyses the reaction a ubiquinone + n Na(+)(in) + NADH + H(+) = a ubiquinol + n Na(+)(out) + NAD(+). In terms of biological role, NQR complex catalyzes the reduction of ubiquinone-1 to ubiquinol by two successive reactions, coupled with the transport of Na(+) ions from the cytoplasm to the periplasm. The first step is catalyzed by NqrF, which accepts electrons from NADH and reduces ubiquinone-1 to ubisemiquinone by a one-electron transfer pathway. The protein is Na(+)-translocating NADH-quinone reductase subunit F of Pseudomonas aeruginosa (strain ATCC 15692 / DSM 22644 / CIP 104116 / JCM 14847 / LMG 12228 / 1C / PRS 101 / PAO1).